Reading from the N-terminus, the 99-residue chain is Co-chaperonin GroES (99 aa).

Belongs to the GroES chaperonin family. In terms of assembly, heptamer of 7 subunits arranged in a ring. Interacts with the chaperonin GroEL.

The protein resides in the cytoplasm. Its function is as follows. Together with the chaperonin GroEL, plays an essential role in assisting protein folding. The GroEL-GroES system forms a nano-cage that allows encapsulation of the non-native substrate proteins and provides a physical environment optimized to promote and accelerate protein folding. GroES binds to the apical surface of the GroEL ring, thereby capping the opening of the GroEL channel. This chain is Co-chaperonin GroES, found in Corynebacterium jeikeium (strain K411).